The chain runs to 471 residues: FAD-linked oxidoreductase sorD (471 aa).

An N-terminal signal peptide occupies residues 1 to 23; it reads MQAASAFATCLLASVGGNSSAVA. Residues Asn-18, Asn-29, Asn-174, Asn-279, and Asn-351 are each glycosylated (N-linked (GlcNAc...) asparagine). The FAD-binding PCMH-type domain occupies 41–212; the sequence is LLTTPSAIVW…TDFSIRTEPV (172 aa).

The protein belongs to the oxygen-dependent FAD-linked oxidoreductase family. It depends on FAD as a cofactor.

The protein operates within secondary metabolite biosynthesis. Its function is as follows. FAD-linked oxidoreductase; part of the gene cluster that mediates the biosynthesis of sorbicillinoids, a diverse group of yellow secondary metabolites that restrict growth of competing pathogenic fungi but not of bacteria. Sorbicillinoids biosynthesis requires the action of two PKSs. SorA iteratively combines three acetyl units and the growing chain is modified by the ketoacyl reductase subunit, and optional by the enoyl reductase subunit in the second cycle. The polyketide is then handed over to the PKS SorB, which adds three more acetyl units, and two methyl groups. SorB releases an aldehyde, which undergoes spontaneous cyclization resulting in the formation of sorbicillin or 2',3'-dihydrosorbicillin. The monooxygenase sorC oxidizes sorbicillin and 2',3'-dihydrosorbicillin to 2',3'-dihydrosorbicillinol and sorbicillinol, respectively. The oxidoreductase sorD further converts sorbicillinol into oxosorbicillinol. Sorbicillinol is the building block for the other sorbicillinoids such as disorbicillinol, bisvertinolon, and dihydrobisvertinolone. The sequence is that of FAD-linked oxidoreductase sorD from Penicillium rubens (strain ATCC 28089 / DSM 1075 / NRRL 1951 / Wisconsin 54-1255) (Penicillium chrysogenum).